A 70-amino-acid chain; its full sequence is U-scoloptoxin(20)-Sm1a (70 aa).

The first 24 residues, 1 to 24 (MKKRSQVFCIFIAMVLLILPLSMS), serve as a signal peptide directing secretion.

This sequence belongs to the scoloptoxin-20 family. In terms of processing, contains 3 disulfide bonds. In terms of tissue distribution, expressed by the venom gland.

The protein resides in the secreted. The chain is U-scoloptoxin(20)-Sm1a from Scolopendra morsitans (Tanzanian blue ringleg centipede).